Reading from the N-terminus, the 562-residue chain is Protein FAM83D-A (562 aa).

A disordered region spans residues 424–471; sequence ITTQTTETSQCTTQTPAPTSSVARLSNSSNSSSSSFSSTSITSTGSNC. Residues 425–471 show a composition bias toward low complexity; that stretch reads TTQTTETSQCTTQTPAPTSSVARLSNSSNSSSSSFSSTSITSTGSNC.

It belongs to the FAM83 family.

Its subcellular location is the cytoplasm. The protein localises to the cytoskeleton. It localises to the spindle. It is found in the spindle pole. In terms of biological role, may regulate cell proliferation, growth, migration and epithelial to mesenchymal transition. May also be important for proper chromosome congression and alignment during mitosis. The protein is Protein FAM83D-A of Xenopus laevis (African clawed frog).